We begin with the raw amino-acid sequence, 703 residues long: Histone-lysine N-methyltransferase SETDB2 (703 aa).

The 71-residue stretch at 178 to 248 (FTKGNPLQLP…DNFSFNNHVR (71 aa)) folds into the MBD domain. Residues 310 to 384 (KCCNCTDGCL…LCQNRVVQHG (75 aa)) enclose the Pre-SET domain. 9 residues coordinate Zn(2+): Cys312, Cys314, Cys318, Cys324, Cys326, Cys365, Cys369, Cys371, and Cys376. Residues 387-678 (LRLQVFKTNT…AGTELTWDYS (292 aa)) enclose the SET domain. 397–399 (KGW) serves as a coordination point for S-adenosyl-L-methionine. Positions 492-588 (TFSPRQARSG…SSSVISGGHP (97 aa)) are disordered. Basic residues predominate over residues 511–525 (RRPKTKTSMLQKRRR). Over residues 550–560 (PEQKSSAGTKI) the composition is skewed to polar residues. The segment covering 571 to 586 (SGYVSEESSSSVISGG) has biased composition (low complexity). S-adenosyl-L-methionine-binding positions include Arg632 and 635–636 (NH). Positions 638, 691, 693, and 698 each coordinate Zn(2+).

It belongs to the class V-like SAM-binding methyltransferase superfamily.

It localises to the nucleus. The protein resides in the chromosome. The catalysed reaction is N(6),N(6)-dimethyl-L-lysyl(9)-[histone H3] + S-adenosyl-L-methionine = N(6),N(6),N(6)-trimethyl-L-lysyl(9)-[histone H3] + S-adenosyl-L-homocysteine + H(+). Histone methyltransferase involved in left-right axis specification in early development and mitosis. Specifically trimethylates 'Lys-9' of histone H3 (H3K9me3). H3K9me3 is a specific tag for epigenetic transcriptional repression that recruits HP1 (CBX1, CBX3 and/or CBX5) proteins to methylated histones. Contributes to H3K9me3 in both the interspersed repetitive elements and centromere-associated repeats. Plays a role in chromosome condensation and segregation during mitosis. This Xenopus laevis (African clawed frog) protein is Histone-lysine N-methyltransferase SETDB2 (setdb2).